We begin with the raw amino-acid sequence, 405 residues long: Argininosuccinate synthase (405 aa).

Residue 11-19 (AYSGGLDTS) participates in ATP binding. Position 90 (Tyr90) interacts with L-citrulline. ATP is bound at residue Gly119. 3 residues coordinate L-aspartate: Thr121, Asn125, and Asp126. Asn125 lines the L-citrulline pocket. L-citrulline contacts are provided by Arg129, Ser178, Ser187, Glu263, and Tyr275.

The protein belongs to the argininosuccinate synthase family. Type 1 subfamily. As to quaternary structure, homotetramer.

It localises to the cytoplasm. The enzyme catalyses L-citrulline + L-aspartate + ATP = 2-(N(omega)-L-arginino)succinate + AMP + diphosphate + H(+). It functions in the pathway amino-acid biosynthesis; L-arginine biosynthesis; L-arginine from L-ornithine and carbamoyl phosphate: step 2/3. This Legionella pneumophila (strain Corby) protein is Argininosuccinate synthase.